The chain runs to 371 residues: Enoyl-[acyl-carrier-protein] reductase [NADH] 2, chloroplastic (371 aa).

Residues 1–67 constitute a chloroplast transit peptide; that stretch reads MGASVTTGLQ…SLNHKRFAVR (67 aa). NAD(+) contacts are provided by residues Gly87, Tyr94, 151-152, 198-199, and Leu248; these read DA and SL. Residues Tyr250 and Tyr260 each act as proton acceptor in the active site. Residues Lys268 and 298 to 302 contribute to the NAD(+) site; that span reads LGSRA.

This sequence belongs to the short-chain dehydrogenases/reductases (SDR) family. FabI subfamily. In terms of assembly, homotetramer.

It localises to the plastid. The protein resides in the chloroplast. It catalyses the reaction a 2,3-saturated acyl-[ACP] + NAD(+) = a (2E)-enoyl-[ACP] + NADH + H(+). Its pathway is lipid metabolism; fatty acid biosynthesis. Its function is as follows. Catalyzes the NAD-dependent reduction of a carbon-carbon double bond in an enoyl moiety that is covalently linked to an acyl carrier protein (ACP). Catalyzes the last reduction step in the de novo synthesis cycle of fatty acids. Involved in the elongation cycle of fatty acids which are used in lipid metabolism. Required for normal plant growth. This chain is Enoyl-[acyl-carrier-protein] reductase [NADH] 2, chloroplastic, found in Oryza sativa subsp. japonica (Rice).